The chain runs to 443 residues: tRNA (guanine-N(7)-)-methyltransferase non-catalytic subunit TRM82 (443 aa).

A disordered region spans residues 67–93; sequence ASKKLKTNDGEPVAQPKKQAKVPKPGP. 3 WD repeats span residues 97 to 137, 193 to 235, and 239 to 279; these read PVYQ…KDNI, GHVS…IVDK, and GHEE…LLFK.

The protein belongs to the WD repeat TRM82 family. In terms of assembly, forms a heterodimer with the catalytic subunit TRM8.

The protein resides in the nucleus. The protein operates within tRNA modification; N(7)-methylguanine-tRNA biosynthesis. Its function is as follows. Required for the formation of N(7)-methylguanine at position 46 (m7G46) in tRNA. In the complex, it is required to stabilize and induce conformational changes of the catalytic subunit. This chain is tRNA (guanine-N(7)-)-methyltransferase non-catalytic subunit TRM82, found in Kluyveromyces lactis (strain ATCC 8585 / CBS 2359 / DSM 70799 / NBRC 1267 / NRRL Y-1140 / WM37) (Yeast).